The primary structure comprises 275 residues: F420-dependent methylenetetrahydromethanopterin dehydrogenase (275 aa).

This sequence belongs to the MTD family.

It catalyses the reaction 5,10-methylenetetrahydromethanopterin + oxidized coenzyme F420-(gamma-L-Glu)(n) + 2 H(+) = 5,10-methenyl-5,6,7,8-tetrahydromethanopterin + reduced coenzyme F420-(gamma-L-Glu)(n). The protein operates within one-carbon metabolism; methanogenesis from CO(2); 5,10-methylene-5,6,7,8-tetrahydromethanopterin from 5,10-methenyl-5,6,7,8-tetrahydromethanopterin (coenzyme F420 route): step 1/1. In terms of biological role, catalyzes the reversible reduction of methenyl-H(4)MPT(+) to methylene-H(4)MPT. The chain is F420-dependent methylenetetrahydromethanopterin dehydrogenase from Methanobrevibacter smithii (strain ATCC 35061 / DSM 861 / OCM 144 / PS).